The sequence spans 41 residues: Photosystem I reaction center subunit IX (41 aa).

A helical membrane pass occupies residues 7 to 27 (YLSTAPVVAFAWLTFTAGFII).

This sequence belongs to the PsaJ family.

The protein resides in the plastid. It is found in the chloroplast thylakoid membrane. Its function is as follows. May help in the organization of the PsaE and PsaF subunits. This chain is Photosystem I reaction center subunit IX, found in Stigeoclonium helveticum (Green alga).